We begin with the raw amino-acid sequence, 290 residues long: Inositol monophosphatase 2 (290 aa).

Positions 83, 103, 105, and 106 each coordinate Mg(2+). E83 is a substrate binding site. Substrate-binding positions include 105-108, 207-209, Q226, and D233; these read IDGT and GSS. D233 serves as a coordination point for Mg(2+).

Belongs to the inositol monophosphatase superfamily. In terms of assembly, homodimer. Mg(2+) serves as cofactor.

The protein localises to the cytoplasm. It catalyses the reaction a myo-inositol phosphate + H2O = myo-inositol + phosphate. Its pathway is polyol metabolism; myo-inositol biosynthesis; myo-inositol from D-glucose 6-phosphate: step 2/2. Can use myo-inositol monophosphates, scylloinositol 1,4-diphosphate, glucose-1-phosphate, beta-glycerophosphate, and 2'-AMP as substrates. Has been implicated as the pharmacological target for lithium Li(+) action in brain. The sequence is that of Inositol monophosphatase 2 (Impa2) from Rattus norvegicus (Rat).